Consider the following 199-residue polypeptide: NAD(P)H dehydrogenase (quinone) (199 aa).

Residues 4 to 190 (VLVLYYSAYG…EAAKYQGAHV (187 aa)) form the Flavodoxin-like domain. Residues 10-15 (SAYGHI) and 78-80 (TRF) contribute to the FMN site. Tyr12 is an NAD(+) binding site. Residue Trp98 coordinates substrate. FMN contacts are provided by residues 113 to 119 (SSATQHG) and His134.

Belongs to the WrbA family. FMN serves as cofactor.

The catalysed reaction is a quinone + NADH + H(+) = a quinol + NAD(+). It carries out the reaction a quinone + NADPH + H(+) = a quinol + NADP(+). This is NAD(P)H dehydrogenase (quinone) from Rhizobium rhizogenes (strain K84 / ATCC BAA-868) (Agrobacterium radiobacter).